The primary structure comprises 430 residues: Gamma-glutamyl phosphate reductase (430 aa).

The protein belongs to the gamma-glutamyl phosphate reductase family.

The protein localises to the cytoplasm. The enzyme catalyses L-glutamate 5-semialdehyde + phosphate + NADP(+) = L-glutamyl 5-phosphate + NADPH + H(+). It participates in amino-acid biosynthesis; L-proline biosynthesis; L-glutamate 5-semialdehyde from L-glutamate: step 2/2. Its function is as follows. Catalyzes the NADPH-dependent reduction of L-glutamate 5-phosphate into L-glutamate 5-semialdehyde and phosphate. The product spontaneously undergoes cyclization to form 1-pyrroline-5-carboxylate. This Psychrobacter arcticus (strain DSM 17307 / VKM B-2377 / 273-4) protein is Gamma-glutamyl phosphate reductase.